The following is a 400-amino-acid chain: Enoyl-[acyl-carrier-protein] reductase [NADH] (400 aa).

Residues 48–53 (GASTGY), 74–75 (FE), 111–112 (DA), and 139–140 (LA) contribute to the NAD(+) site. Residue Y225 coordinates substrate. Y235 functions as the Proton donor in the catalytic mechanism. NAD(+) contacts are provided by residues K244 and 273–275 (VVT).

The protein belongs to the TER reductase family. Monomer.

It catalyses the reaction a 2,3-saturated acyl-[ACP] + NAD(+) = a (2E)-enoyl-[ACP] + NADH + H(+). Its pathway is lipid metabolism; fatty acid biosynthesis. Functionally, involved in the final reduction of the elongation cycle of fatty acid synthesis (FAS II). Catalyzes the reduction of a carbon-carbon double bond in an enoyl moiety that is covalently linked to an acyl carrier protein (ACP). The protein is Enoyl-[acyl-carrier-protein] reductase [NADH] of Burkholderia multivorans (strain ATCC 17616 / 249).